The sequence spans 358 residues: DnaJ homolog subfamily B member 11 (358 aa).

An N-terminal signal peptide occupies residues 1–22 (MAPQNLGTLCLLLLYLLGAAIA). Residues 25 to 90 (DFYKILGVPR…EKRKQYDTYG (66 aa)) form the J domain. Phosphothreonine is present on Thr188. Residue Asn261 is glycosylated (N-linked (GlcNAc...) asparagine).

In terms of assembly, part of a large chaperone multiprotein complex comprising DNAJB11, HSP90B1, HSPA5, HYOU, PDIA2, PDIA4, PDIA6, PPIB, SDF2L1, UGGT1 and very small amounts of ERP29, but not, or at very low levels, CALR nor CANX. Binds to denatured substrates in an ATP-independent manner. Interacts via the J domain with HSPA5 in an ATP-dependent manner. Contains high-mannose Endo H-sensitive carbohydrates. In terms of processing, cys-169, Cys-171, Cys-193 and Cys-196 form intramolecular disulfide bonds. The preferential partner for each Cys is not known. In terms of tissue distribution, pancreas.

It localises to the endoplasmic reticulum lumen. Functionally, as a co-chaperone for HSPA5 it is required for proper folding, trafficking or degradation of proteins. Binds directly to both unfolded proteins that are substrates for ERAD and nascent unfolded peptide chains, but dissociates from the HSPA5-unfolded protein complex before folding is completed. May help recruiting HSPA5 and other chaperones to the substrate. Stimulates HSPA5 ATPase activity. It is necessary for maturation and correct trafficking of PKD1. The sequence is that of DnaJ homolog subfamily B member 11 (DNAJB11) from Canis lupus familiaris (Dog).